We begin with the raw amino-acid sequence, 128 residues long: Aspartate 1-decarboxylase (128 aa).

Serine 25 acts as the Schiff-base intermediate with substrate; via pyruvic acid in catalysis. Serine 25 carries the post-translational modification Pyruvic acid (Ser). Threonine 57 provides a ligand contact to substrate. Tyrosine 58 serves as the catalytic Proton donor. Position 73 to 75 (73 to 75) interacts with substrate; that stretch reads GSA.

It belongs to the PanD family. As to quaternary structure, heterooctamer of four alpha and four beta subunits. Pyruvate serves as cofactor. In terms of processing, is synthesized initially as an inactive proenzyme, which is activated by self-cleavage at a specific serine bond to produce a beta-subunit with a hydroxyl group at its C-terminus and an alpha-subunit with a pyruvoyl group at its N-terminus.

Its subcellular location is the cytoplasm. It carries out the reaction L-aspartate + H(+) = beta-alanine + CO2. It participates in cofactor biosynthesis; (R)-pantothenate biosynthesis; beta-alanine from L-aspartate: step 1/1. Its function is as follows. Catalyzes the pyruvoyl-dependent decarboxylation of aspartate to produce beta-alanine. The protein is Aspartate 1-decarboxylase of Burkholderia vietnamiensis (strain G4 / LMG 22486) (Burkholderia cepacia (strain R1808)).